Consider the following 236-residue polypeptide: MNSEKPDYNYLFKIVIIGDRKTGKTCLMNRFVENTWSEEYRQTNLLHFKVKTIYIDCKIIKLQIWDSQADENFRFNNNNLSNYRSASGFLVVYDCTNENSFSNLKHWIKDIKLYGRPNAINIVVSNKSDLVNEKVIDSDVAKSYCDSLEIPFIETSSKHSSNVEDCFVLLIKNVMKYLETEPTIPQQQQQQQQQQQQQQQQQQQQQQQQQQQQQQQQQQQQQHQQSSKTKIGCLIQ.

18–25 lines the GTP pocket; that stretch reads GDRKTGKT. Positions 40–48 match the Effector region motif; that stretch reads YRQTNLLHF. GTP is bound by residues 66 to 70 and 126 to 129; these read DSQAD and NKSD. A compositionally biased stretch (low complexity) spans 192–225; that stretch reads QQQQQQQQQQQQQQQQQQQQQQQQQQQQQQQHQQ. Residues 192 to 236 are disordered; it reads QQQQQQQQQQQQQQQQQQQQQQQQQQQQQQQHQQSSKTKIGCLIQ. Cys233 is modified (cysteine methyl ester). Cys233 is lipidated: S-geranylgeranyl cysteine. The propeptide at 234 to 236 is removed in mature form; that stretch reads LIQ.

Belongs to the small GTPase superfamily. Rab family.

The protein resides in the cell membrane. In Dictyostelium discoideum (Social amoeba), this protein is Ras-related protein RabY (rabY).